Consider the following 89-residue polypeptide: UPF0367 protein CYB_2632 (89 aa).

The interval 69–89 is disordered; that stretch reads SKSGSASPMGTRPGFLAQLQS.

It belongs to the UPF0367 family.

The protein is UPF0367 protein CYB_2632 of Synechococcus sp. (strain JA-2-3B'a(2-13)) (Cyanobacteria bacterium Yellowstone B-Prime).